The primary structure comprises 617 residues: D-glucuronyl C5-epimerase (617 aa).

The Cytoplasmic segment spans residues 1–11 (MRCLAARVNYK). Residues 12–28 (TLIIICALFTLVTVLLW) form a helical; Signal-anchor for type II membrane protein membrane-spanning segment. At 29–617 (NKCSSDKAIQ…YLKGSRAKHN (589 aa)) the chain is on the lumenal side. Residues Y179, 184–186 (RDR), Q201, Y209, Q212, and Q215 contribute to the substrate site. Ca(2+) contacts are provided by T237, E239, T268, N269, and D392. Substrate-binding positions include 429-432 (KLGE), 499-500 (EY), N510, Y514, Y560, R563, and 572-581 (NLARWDYHTT).

It belongs to the D-glucuronyl C5-epimerase family. In terms of assembly, homodimer. Interacts with HS2ST1.

The protein resides in the golgi apparatus membrane. It catalyses the reaction [heparosan-N-sulfate](n) = [heparan-N-sulfate](n). The protein operates within glycan metabolism; heparan sulfate biosynthesis. It participates in glycan metabolism; heparin biosynthesis. In terms of biological role, converts D-glucuronic acid residues adjacent to N-sulfate sugar residues to L-iduronic acid residues, both in maturing heparan sulfate (HS) and heparin chains. This is important for further modifications that determine the specificity of interactions between these glycosaminoglycans and proteins. This is D-glucuronyl C5-epimerase (GLCE) from Bos taurus (Bovine).